We begin with the raw amino-acid sequence, 259 residues long: Deoxyribose-phosphate aldolase (259 aa).

The Proton donor/acceptor role is filled by Asp104. Lys168 (schiff-base intermediate with acetaldehyde) is an active-site residue. The Proton donor/acceptor role is filled by Lys200.

The protein belongs to the DeoC/FbaB aldolase family. DeoC type 2 subfamily.

The protein localises to the cytoplasm. The catalysed reaction is 2-deoxy-D-ribose 5-phosphate = D-glyceraldehyde 3-phosphate + acetaldehyde. It functions in the pathway carbohydrate degradation; 2-deoxy-D-ribose 1-phosphate degradation; D-glyceraldehyde 3-phosphate and acetaldehyde from 2-deoxy-alpha-D-ribose 1-phosphate: step 2/2. Functionally, catalyzes a reversible aldol reaction between acetaldehyde and D-glyceraldehyde 3-phosphate to generate 2-deoxy-D-ribose 5-phosphate. In Agrobacterium fabrum (strain C58 / ATCC 33970) (Agrobacterium tumefaciens (strain C58)), this protein is Deoxyribose-phosphate aldolase.